The chain runs to 385 residues: Cytochrome b (385 aa).

Helical transmembrane passes span 32–52, 76–98, 113–133, and 179–199; these read MGSLLGLCLVIQIVTGIFMAM, YILRYLHANGASFFFMVMFMHMA, LWNVGVIIFILTIATAFLGYC, and FFALHYLVPFIIAAMVIMHLM. The heme b site is built by histidine 82 and histidine 96. Heme b contacts are provided by histidine 183 and histidine 197. Histidine 202 serves as a coordination point for a ubiquinone. The next 4 helical transmembrane spans lie at 225-245, 289-309, 321-341, and 348-368; these read FIFKDLVTVFLFMLILALFVF, LLGVITMFAAILVLLVLPFTD, LSKFFFFIFVFNFVLLGQIGA, and YVLMGQIATFIYFAYFLIIVP.

The protein belongs to the cytochrome b family. In terms of assembly, fungal cytochrome b-c1 complex contains 10 subunits; 3 respiratory subunits, 2 core proteins and 5 low-molecular weight proteins. Cytochrome b-c1 complex is a homodimer. Heme b is required as a cofactor.

Its subcellular location is the mitochondrion inner membrane. Component of the ubiquinol-cytochrome c reductase complex (complex III or cytochrome b-c1 complex) that is part of the mitochondrial respiratory chain. The b-c1 complex mediates electron transfer from ubiquinol to cytochrome c. Contributes to the generation of a proton gradient across the mitochondrial membrane that is then used for ATP synthesis. This Saccharomyces paradoxus (Yeast) protein is Cytochrome b (COB).